Here is a 465-residue protein sequence, read N- to C-terminus: Cysteine--tRNA ligase (465 aa).

Residue cysteine 27 coordinates Zn(2+). The 'HIGH' region signature appears at 29-39 (PTVYDFIHIGN). Residues cysteine 207, histidine 232, and glutamate 236 each contribute to the Zn(2+) site. The 'KMSKS' region motif lies at 264–268 (KMSKS). An ATP-binding site is contributed by lysine 267.

It belongs to the class-I aminoacyl-tRNA synthetase family. As to quaternary structure, monomer. The cofactor is Zn(2+).

It localises to the cytoplasm. The catalysed reaction is tRNA(Cys) + L-cysteine + ATP = L-cysteinyl-tRNA(Cys) + AMP + diphosphate. The polypeptide is Cysteine--tRNA ligase (Caldicellulosiruptor saccharolyticus (strain ATCC 43494 / DSM 8903 / Tp8T 6331)).